The primary structure comprises 631 residues: Phosphomethylpyrimidine synthase (631 aa).

Substrate-binding positions include N239, M268, Y297, H333, 353-355, 394-397, and E433; these read SRG and DGLR. H437 provides a ligand contact to Zn(2+). Y460 serves as a coordination point for substrate. H501 provides a ligand contact to Zn(2+). [4Fe-4S] cluster contacts are provided by C581, C584, and C589.

The protein belongs to the ThiC family. Homodimer. Requires [4Fe-4S] cluster as cofactor.

The enzyme catalyses 5-amino-1-(5-phospho-beta-D-ribosyl)imidazole + S-adenosyl-L-methionine = 4-amino-2-methyl-5-(phosphooxymethyl)pyrimidine + CO + 5'-deoxyadenosine + formate + L-methionine + 3 H(+). It functions in the pathway cofactor biosynthesis; thiamine diphosphate biosynthesis. Its function is as follows. Catalyzes the synthesis of the hydroxymethylpyrimidine phosphate (HMP-P) moiety of thiamine from aminoimidazole ribotide (AIR) in a radical S-adenosyl-L-methionine (SAM)-dependent reaction. In Salmonella enteritidis PT4 (strain P125109), this protein is Phosphomethylpyrimidine synthase.